The chain runs to 1220 residues: DNA-directed RNA polymerase subunit beta' (1220 aa).

C60, C62, C75, and C78 together coordinate Zn(2+). Residues D449, D451, and D453 each coordinate Mg(2+). C818, C892, C899, and C902 together coordinate Zn(2+).

Belongs to the RNA polymerase beta' chain family. In terms of assembly, the RNAP catalytic core consists of 2 alpha, 1 beta, 1 beta' and 1 omega subunit. When a sigma factor is associated with the core the holoenzyme is formed, which can initiate transcription. The cofactor is Mg(2+). Zn(2+) serves as cofactor.

It carries out the reaction RNA(n) + a ribonucleoside 5'-triphosphate = RNA(n+1) + diphosphate. In terms of biological role, DNA-dependent RNA polymerase catalyzes the transcription of DNA into RNA using the four ribonucleoside triphosphates as substrates. The polypeptide is DNA-directed RNA polymerase subunit beta' (Lacticaseibacillus casei (strain BL23) (Lactobacillus casei)).